The sequence spans 287 residues: Small ribosomal subunit protein uS2 (287 aa).

The disordered stretch occupies residues 235 to 287 (ESGFATGGGDWEATAPAAASGWDDAAAQPQNWDSAAQGAASWDEAAAPKEGQW). Residues 247–261 (ATAPAAASGWDDAAA) show a composition bias toward low complexity.

It belongs to the universal ribosomal protein uS2 family. As to quaternary structure, component of the small ribosomal subunit. Mature ribosomes consist of a small (40S) and a large (60S) subunit. The 40S subunit contains about 33 different proteins and 1 molecule of RNA (18S). The 60S subunit contains about 49 different proteins and 3 molecules of RNA (25S, 5.8S and 5S). Interacts with RPS21.

The protein resides in the cytoplasm. Its function is as follows. Required for the assembly and/or stability of the 40S ribosomal subunit. Required for the processing of the 20S rRNA-precursor to mature 18S rRNA in a late step of the maturation of 40S ribosomal subunits. This is Small ribosomal subunit protein uS2 from Pyricularia oryzae (strain 70-15 / ATCC MYA-4617 / FGSC 8958) (Rice blast fungus).